The primary structure comprises 311 residues: Ribosomal RNA small subunit methyltransferase H (311 aa).

S-adenosyl-L-methionine-binding positions include glycine 33–histidine 35, aspartate 51, phenylalanine 78, aspartate 99, and glutamine 106. The interval glutamate 289 to alanine 311 is disordered.

This sequence belongs to the methyltransferase superfamily. RsmH family.

The protein resides in the cytoplasm. It carries out the reaction cytidine(1402) in 16S rRNA + S-adenosyl-L-methionine = N(4)-methylcytidine(1402) in 16S rRNA + S-adenosyl-L-homocysteine + H(+). Its function is as follows. Specifically methylates the N4 position of cytidine in position 1402 (C1402) of 16S rRNA. In Carboxydothermus hydrogenoformans (strain ATCC BAA-161 / DSM 6008 / Z-2901), this protein is Ribosomal RNA small subunit methyltransferase H.